The primary structure comprises 231 residues: Probable methylthioribulose-1-phosphate dehydratase (231 aa).

Cys90 is a substrate binding site. Zn(2+) contacts are provided by His108 and His110. Glu132 serves as the catalytic Proton donor/acceptor. His188 contacts Zn(2+).

The protein belongs to the aldolase class II family. MtnB subfamily. The cofactor is Zn(2+).

It is found in the cytoplasm. The catalysed reaction is 5-(methylsulfanyl)-D-ribulose 1-phosphate = 5-methylsulfanyl-2,3-dioxopentyl phosphate + H2O. It functions in the pathway amino-acid biosynthesis; L-methionine biosynthesis via salvage pathway; L-methionine from S-methyl-5-thio-alpha-D-ribose 1-phosphate: step 2/6. Catalyzes the dehydration of methylthioribulose-1-phosphate (MTRu-1-P) into 2,3-diketo-5-methylthiopentyl-1-phosphate (DK-MTP-1-P). The sequence is that of Probable methylthioribulose-1-phosphate dehydratase from Anopheles gambiae (African malaria mosquito).